Reading from the N-terminus, the 276-residue chain is 3-methyl-2-oxobutanoate hydroxymethyltransferase (276 aa).

Residues D46 and D85 each contribute to the Mg(2+) site. Residues 46-47 (DS), D85, and K115 contribute to the 3-methyl-2-oxobutanoate site. E117 serves as a coordination point for Mg(2+). E184 serves as the catalytic Proton acceptor.

It belongs to the PanB family. In terms of assembly, homodecamer; pentamer of dimers. Mg(2+) is required as a cofactor.

Its subcellular location is the cytoplasm. The catalysed reaction is 3-methyl-2-oxobutanoate + (6R)-5,10-methylene-5,6,7,8-tetrahydrofolate + H2O = 2-dehydropantoate + (6S)-5,6,7,8-tetrahydrofolate. The protein operates within cofactor biosynthesis; (R)-pantothenate biosynthesis; (R)-pantoate from 3-methyl-2-oxobutanoate: step 1/2. In terms of biological role, catalyzes the reversible reaction in which hydroxymethyl group from 5,10-methylenetetrahydrofolate is transferred onto alpha-ketoisovalerate to form ketopantoate. The sequence is that of 3-methyl-2-oxobutanoate hydroxymethyltransferase from Heliobacterium modesticaldum (strain ATCC 51547 / Ice1).